Reading from the N-terminus, the 309-residue chain is MLEVVTAGEPLVALVPQEPGHLRGKRLLEVYVGGAEVNVAVALARLGVKVGFVGRVGEDELGAMVEERLRAEGVDLTHFRRAPGFTGLYLREYLPLGQGRVFYYRKGSAGSALAPGAFDPDYLEGVRFLHLSGITPALSPEARAFSLWAMEEAKRRGVRVSLDVNYRQTLWSPEEARGFLERALPGVDLLFLSEEEAELLFGRVEEALRALSAPEVVLKRGAKGAWAFVDGRRVEGSAFAVEAVDPVGAGDAFAAGYLAGAVWGLPVEERLRLANLLGASVAASRGDHEGAPYREDLEVLLKATQTFMR.

Residues 34–38, tyrosine 89, 103–105, and arginine 167 each bind substrate; these read GAEVN and YYR. ATP-binding positions include 165 to 167, serine 193, 219 to 225, 248 to 251, and asparagine 275; these read NYR, KRGAKGA, and GAGD. Aspartate 251 contacts substrate. Aspartate 251 acts as the Proton acceptor in catalysis. Position 287 (aspartate 287) interacts with substrate.

The protein belongs to the carbohydrate kinase pfkB family. In terms of assembly, homohexamer; trimer of dimers.

It carries out the reaction 2-dehydro-3-deoxy-D-gluconate + ATP = 2-dehydro-3-deoxy-6-phospho-D-gluconate + ADP + H(+). It functions in the pathway carbohydrate acid metabolism; 2-dehydro-3-deoxy-D-gluconate degradation; D-glyceraldehyde 3-phosphate and pyruvate from 2-dehydro-3-deoxy-D-gluconate: step 1/2. Functionally, involved in the degradation of glucose via the semi-phosphorylative Entner-Doudoroff pathway. Catalyzes the phosphorylation of 2-keto-3-deoxygluconate (KDG) to produce 2-keto-3-deoxy-6-phosphogluconate (KDPG). The sequence is that of 2-dehydro-3-deoxygluconokinase (kdgK) from Thermus thermophilus (strain ATCC 27634 / DSM 579 / HB8).